The sequence spans 562 residues: Probable malate:quinone oxidoreductase (562 aa).

The interval 530–562 (EVPDKSATPPDPTIAPKHQHSPTHNANSEMQAL) is disordered. Positions 551 to 562 (PTHNANSEMQAL) are enriched in polar residues.

The protein belongs to the MQO family. Requires FAD as cofactor.

The catalysed reaction is (S)-malate + a quinone = a quinol + oxaloacetate. It participates in carbohydrate metabolism; tricarboxylic acid cycle; oxaloacetate from (S)-malate (quinone route): step 1/1. The protein is Probable malate:quinone oxidoreductase of Xylella fastidiosa (strain 9a5c).